Reading from the N-terminus, the 329-residue chain is Phosphoenolpyruvate transferase (329 aa).

D61 is a 7,8-didemethyl-8-hydroxy-5-deazariboflavin binding site.

The protein belongs to the CofD family. In terms of assembly, homodimer. It depends on Mg(2+) as a cofactor.

It catalyses the reaction enolpyruvoyl-2-diphospho-5'-guanosine + 7,8-didemethyl-8-hydroxy-5-deazariboflavin = dehydro coenzyme F420-0 + GMP + H(+). It functions in the pathway cofactor biosynthesis; coenzyme F420 biosynthesis. Catalyzes the transfer of the phosphoenolpyruvate moiety from enoylpyruvoyl-2-diphospho-5'-guanosine (EPPG) to 7,8-didemethyl-8-hydroxy-5-deazariboflavin (FO) with the formation of dehydro coenzyme F420-0 and GMP. The sequence is that of Phosphoenolpyruvate transferase from Mycobacterium marinum (strain ATCC BAA-535 / M).